Reading from the N-terminus, the 325-residue chain is Dimethylallyltranstransferase (325 aa).

2 residues coordinate isopentenyl diphosphate: R54 and H84. Mg(2+) is bound by residues D91 and D95. Residues 91 to 95 (DRVVD) carry the DDXXD motif motif. R101 contacts isopentenyl diphosphate. The short motif at 217 to 221 (RDIIA) is the DDXXD motif element.

Belongs to the FPP/GGPP synthase family. Requires Mg(2+) as cofactor.

The catalysed reaction is isopentenyl diphosphate + dimethylallyl diphosphate = (2E)-geranyl diphosphate + diphosphate. It participates in isoprenoid biosynthesis; geranyl diphosphate biosynthesis; geranyl diphosphate from dimethylallyl diphosphate and isopentenyl diphosphate: step 1/1. In terms of biological role, catalyzes the addition of isopentenyl diphosphate (IPP) onto dimethylallyl diphosphate (DMAPP) to form geranyl pyrophosphate (GPP). Is probably involved in the biosynthesis of decaprenyl diphosphate, which is required for mycobacterial cell wall synthesis. Could be required for host endothelial-cell invasion and/or intracellular survival. The sequence is that of Dimethylallyltranstransferase from Mycobacterium tuberculosis (strain ATCC 25618 / H37Rv).